We begin with the raw amino-acid sequence, 161 residues long: Allophycocyanin subunit alpha-B (161 aa).

Asn-71 is modified (N4-methylasparagine). Cys-81 is a (2R,3E)-phycocyanobilin binding site.

This sequence belongs to the phycobiliprotein family. Heterodimer of an alpha-B and a beta chain forming AP-B. Post-translationally, contains one covalently linked bilin chromophore. The chromophore is added by phycocyanobilin lyase CpcUS.

It is found in the cellular thylakoid membrane. In terms of biological role, a variant alpha-allophycocyanin (AP) which forms a complex with beta-AP with maximum absorption at approximately 670 nanometers. It is an important phycobilisome terminal emitter involved in energy transfer to photosystem I. The sequence is that of Allophycocyanin subunit alpha-B (apcD) from Picosynechococcus sp. (strain ATCC 27264 / PCC 7002 / PR-6) (Agmenellum quadruplicatum).